A 364-amino-acid chain; its full sequence is Protein RecA (364 aa).

ATP is bound at residue 77–84 (GPESSGKT). Residues 343-364 (DRFLQNGGPDPDDGDGDATAEM) form a disordered region. The segment covering 352 to 364 (DPDDGDGDATAEM) has biased composition (acidic residues).

This sequence belongs to the RecA family.

The protein resides in the cytoplasm. Its function is as follows. Can catalyze the hydrolysis of ATP in the presence of single-stranded DNA, the ATP-dependent uptake of single-stranded DNA by duplex DNA, and the ATP-dependent hybridization of homologous single-stranded DNAs. It interacts with LexA causing its activation and leading to its autocatalytic cleavage. The chain is Protein RecA from Rhizobium johnstonii (strain DSM 114642 / LMG 32736 / 3841) (Rhizobium leguminosarum bv. viciae).